Here is a 440-residue protein sequence, read N- to C-terminus: C4-dicarboxylate transport protein (440 aa).

Helical transmembrane passes span 15-35, 46-66, 78-98, 146-166, 190-210, 224-244, 291-311, 332-352, and 354-374; these read VLVA…TGVA, LIKM…IAGM, YALL…LVVV, AFAN…GFAL, IINM…AFTI, LMAC…GGIC, VVGL…SIYL, ITLL…TGSG, and IVLA…LALI. Residues 420-440 form a disordered region; sequence GAPLVDTRPTDDLGVAEGPAR.

The protein belongs to the dicarboxylate/amino acid:cation symporter (DAACS) (TC 2.A.23) family.

It is found in the cell inner membrane. Its function is as follows. Responsible for the transport of dicarboxylates such as succinate, fumarate, and malate from the periplasm across the membrane. This Pseudomonas putida (strain ATCC 700007 / DSM 6899 / JCM 31910 / BCRC 17059 / LMG 24140 / F1) protein is C4-dicarboxylate transport protein.